The following is a 65-amino-acid chain: Large ribosomal subunit protein bL32 (65 aa).

Basic residues predominate over residues 1 to 18; it reads MAVPKRRHSKSRTRKRRS. The disordered stretch occupies residues 1–20; sequence MAVPKRRHSKSRTRKRRSTY.

Belongs to the bacterial ribosomal protein bL32 family.

The polypeptide is Large ribosomal subunit protein bL32 (Salinibacter ruber (strain DSM 13855 / M31)).